The following is a 94-amino-acid chain: Co-chaperonin GroES (94 aa).

Belongs to the GroES chaperonin family. In terms of assembly, heptamer of 7 subunits arranged in a ring. Interacts with the chaperonin GroEL.

Its subcellular location is the cytoplasm. Together with the chaperonin GroEL, plays an essential role in assisting protein folding. The GroEL-GroES system forms a nano-cage that allows encapsulation of the non-native substrate proteins and provides a physical environment optimized to promote and accelerate protein folding. GroES binds to the apical surface of the GroEL ring, thereby capping the opening of the GroEL channel. This chain is Co-chaperonin GroES, found in Leuconostoc citreum (strain KM20).